We begin with the raw amino-acid sequence, 676 residues long: UvrABC system protein B (676 aa).

The 389-residue stretch at 26–414 (EGLENGLAHQ…SDGEIAEQVV (389 aa)) folds into the Helicase ATP-binding domain. Residue 39–46 (GVTGSGKT) participates in ATP binding. A Beta-hairpin motif is present at residues 92 to 115 (YFDYYQPEAYVPTTDTFIEKDSSV). The region spanning 432-598 (QVDDLLSEIR…ALKKDVADIL (167 aa)) is the Helicase C-terminal domain. One can recognise a UVR domain in the interval 636–671 (EKAIQKLESKMYQHAKDLEFEQAAQVRDEIDNLRKQ).

Belongs to the UvrB family. In terms of assembly, forms a heterotetramer with UvrA during the search for lesions. Interacts with UvrC in an incision complex.

The protein localises to the cytoplasm. Its function is as follows. The UvrABC repair system catalyzes the recognition and processing of DNA lesions. A damage recognition complex composed of 2 UvrA and 2 UvrB subunits scans DNA for abnormalities. Upon binding of the UvrA(2)B(2) complex to a putative damaged site, the DNA wraps around one UvrB monomer. DNA wrap is dependent on ATP binding by UvrB and probably causes local melting of the DNA helix, facilitating insertion of UvrB beta-hairpin between the DNA strands. Then UvrB probes one DNA strand for the presence of a lesion. If a lesion is found the UvrA subunits dissociate and the UvrB-DNA preincision complex is formed. This complex is subsequently bound by UvrC and the second UvrB is released. If no lesion is found, the DNA wraps around the other UvrB subunit that will check the other stand for damage. This is UvrABC system protein B from Aliivibrio fischeri (strain ATCC 700601 / ES114) (Vibrio fischeri).